Consider the following 704-residue polypeptide: Protein cueball (704 aa).

Residues 1-26 (MKSPCRAAAGWLVLLLSSCCLGYVIA) form the signal peptide. The Extracellular segment spans residues 27-594 (TEWAAAVTTD…TYCKESFNRT (568 aa)). LDL-receptor class B repeat units follow at residues 69 to 119 (GKLY…DHLE), 120 to 166 (RRLY…EATT), 199 to 242 (RHLY…DHYR), and 243 to 288 (NRLY…KNDY). N152 and N219 each carry an N-linked (GlcNAc...) asparagine glycan. 3 consecutive EGF-like domains span residues 363–397 (TQQQ…KLCE), 432–478 (DRNR…ARCE), and 514–551 (EEYS…QRCE). Disulfide bonds link C372/C385, C387/C396, C436/C446, C440/C465, C467/C477, C518/C528, C522/C539, and C541/C550. A glycan (N-linked (GlcNAc...) asparagine) is linked at N375. N450 is a glycosylation site (N-linked (GlcNAc...) asparagine). The N-linked (GlcNAc...) asparagine glycan is linked to N532. N-linked (GlcNAc...) asparagine glycosylation occurs at N592. A helical membrane pass occupies residues 595-615 (VVYTSLCFTVSFALLLAVVLV). Residues 616–704 (VSRMMKPPRP…NCGDGTAERK (89 aa)) lie on the Cytoplasmic side of the membrane.

It belongs to the cueball family.

It is found in the cell membrane. Has a role in spermatogenesis and oogenesis. This is Protein cueball from Anopheles gambiae (African malaria mosquito).